Consider the following 548-residue polypeptide: Uridine-cytidine kinase-like 1 (548 aa).

Positions 1–18 (MAAPPASMSAAPSPLQSA) are enriched in low complexity. Positions 1–74 (MAAPPASMSA…CKSEPPLLRT (74 aa)) are disordered. Ser56 and Ser63 each carry phosphoserine. ATP is bound at residue 105–112 (GGSASGKT). The residue at position 539 (Ser539) is a Phosphoserine.

The protein belongs to the uridine kinase family. As to quaternary structure, interacts with RNF19B. Ubiquitinated by RNF19B; which induces proteasomal degradation.

Its subcellular location is the cytoplasm. The protein localises to the nucleus. It carries out the reaction uridine + ATP = UMP + ADP + H(+). The enzyme catalyses cytidine + ATP = CMP + ADP + H(+). The protein operates within pyrimidine metabolism; UMP biosynthesis via salvage pathway; UMP from uridine: step 1/1. May contribute to UTP accumulation needed for blast transformation and proliferation. This is Uridine-cytidine kinase-like 1 (Uckl1) from Mus musculus (Mouse).